The sequence spans 362 residues: 3-dehydroquinate synthase (362 aa).

NAD(+) contacts are provided by residues 70–75, 104–108, 128–129, Lys-141, and Lys-150; these read DGEKYK, GVIGD, and TT. Positions 183, 246, and 263 each coordinate Zn(2+).

Belongs to the sugar phosphate cyclases superfamily. Dehydroquinate synthase family. The cofactor is Co(2+). It depends on Zn(2+) as a cofactor. Requires NAD(+) as cofactor.

The protein localises to the cytoplasm. The enzyme catalyses 7-phospho-2-dehydro-3-deoxy-D-arabino-heptonate = 3-dehydroquinate + phosphate. It participates in metabolic intermediate biosynthesis; chorismate biosynthesis; chorismate from D-erythrose 4-phosphate and phosphoenolpyruvate: step 2/7. Its function is as follows. Catalyzes the conversion of 3-deoxy-D-arabino-heptulosonate 7-phosphate (DAHP) to dehydroquinate (DHQ). This is 3-dehydroquinate synthase from Acinetobacter baylyi (strain ATCC 33305 / BD413 / ADP1).